The following is a 479-amino-acid chain: Nuclear receptor subfamily 6 group A member 1 (479 aa).

A disordered region spans residues 1–32; the sequence is MERDERPPSGGGGGGGSAGFLEPPAALPPPPR. Gly residues predominate over residues 9 to 18; it reads SGGGGGGGSA. A DNA-binding region (nuclear receptor) is located at residues 57-132; sequence QRTCLICGDR…MGMNRKAIRE (76 aa). Residues C60, C63, C77, C80, C96, C102, C112, and C115 each contribute to the Zn(2+) site. 2 NR C4-type zinc fingers span residues 60 to 80 and 96 to 120; these read CLIC…CEGC and CSRD…LLKC. 2 disordered regions span residues 131–150 and 162–198; these read REDG…QISE and FEEE…TLSS. Residues 165-177 show a composition bias toward basic and acidic residues; that stretch reads EANHWSNHGDSDH. Residues 172 to 252 are sufficient for interaction with UIMC1; that stretch reads HGDSDHSSPG…RSLDPQSYSL (81 aa). The span at 178-198 shows a compositional bias: polar residues; that stretch reads SSPGNRASESNQPSPGSTLSS. An NR LBD domain is found at 248-479; it reads QSYSLIHQLV…HSCKTSVGKE (232 aa).

The protein belongs to the nuclear hormone receptor family. NR6 subfamily. In terms of assembly, homodimer. Interacts with UIMC1.

The protein resides in the nucleus. Functionally, orphan nuclear receptor that binds to a response element containing the sequence 5'-TCAAGGTCA-3'. Acts as a regulator of embryonic stem cell pluripotency by mediating repression of POU5F1/OCT4: binds to the DR0 element within the POU5F1/OCT4 promoter and inhibits POU5F1/OCT4 expression during embryonic stem cell differentiation. Involved in the regulation of gene expression in germ cell development during gametogenesis. The protein is Nuclear receptor subfamily 6 group A member 1 (NR6A1) of Sus scrofa (Pig).